A 470-amino-acid polypeptide reads, in one-letter code: Carboxypeptidase Q (470 aa).

The signal sequence occupies residues 1–18 (MRSLFFLFIVHLLALGSG). A propeptide spanning residues 19 to 42 (KAVFKNGVSQRTFREIKEEIANYE) is cleaved from the precursor. An N-linked (GlcNAc...) asparagine glycan is attached at Asn-59. The Zn(2+) site is built by His-288 and Asp-300. Residue Glu-334 is the Nucleophile of the active site. Zn(2+) is bound at residue Glu-335. Asn-351 is a glycosylation site (N-linked (GlcNAc...) asparagine). Asp-362 contributes to the Zn(2+) binding site. N-linked (GlcNAc...) asparagine glycosylation is present at Asn-394. His-432 provides a ligand contact to Zn(2+).

It belongs to the peptidase M28 family. As to quaternary structure, homodimer. The monomeric form is inactive while the homodimer is active. Post-translationally, N-glycosylated. The secreted form is modified by hybrid or complex type oligosaccharide chains.

The protein localises to the endoplasmic reticulum. The protein resides in the golgi apparatus. It is found in the lysosome. Its subcellular location is the secreted. Functionally, carboxypeptidase that may play an important role in the hydrolysis of circulating peptides. Catalyzes the hydrolysis of dipeptides with unsubstituted terminals into amino acids. May play a role in the liberation of thyroxine hormone from its thyroglobulin (Tg) precursor. The sequence is that of Carboxypeptidase Q (Cpq) from Mus musculus (Mouse).